Here is a 145-residue protein sequence, read N- to C-terminus: Cytochrome c550 (145 aa).

An N-terminal signal peptide occupies residues 1-24 (MNKNNVLRGLLVLAGLSLSSLALA). The 83-residue stretch at 60–142 (LAVEIGASAY…AIRSYLESVH (83 aa)) folds into the Cytochrome c domain. 4 residues coordinate heme c: Cys-73, Cys-76, His-77, and Met-119.

Monomer. Interacts with the quinoprotein ethanol dehydrogenase (QEDH) ExaA. In terms of processing, binds 1 heme group per subunit.

It localises to the periplasm. It functions in the pathway alcohol metabolism; ethanol degradation; acetate from ethanol. Is an essential component of the ethanol oxidation system that allows P.aeruginosa to grow on ethanol as the sole carbon and energy source. Is the direct electron acceptor of the quinoprotein ethanol dehydrogenase (QEDH). The sequence is that of Cytochrome c550 from Pseudomonas aeruginosa (strain ATCC 15692 / DSM 22644 / CIP 104116 / JCM 14847 / LMG 12228 / 1C / PRS 101 / PAO1).